Here is a 466-residue protein sequence, read N- to C-terminus: ATP synthase subunit beta (466 aa).

Residue 148 to 155 (GGAGVGKT) coordinates ATP.

It belongs to the ATPase alpha/beta chains family. F-type ATPases have 2 components, CF(1) - the catalytic core - and CF(0) - the membrane proton channel. CF(1) has five subunits: alpha(3), beta(3), gamma(1), delta(1), epsilon(1). CF(0) has three main subunits: a(1), b(2) and c(9-12). The alpha and beta chains form an alternating ring which encloses part of the gamma chain. CF(1) is attached to CF(0) by a central stalk formed by the gamma and epsilon chains, while a peripheral stalk is formed by the delta and b chains.

Its subcellular location is the cell inner membrane. It carries out the reaction ATP + H2O + 4 H(+)(in) = ADP + phosphate + 5 H(+)(out). Functionally, produces ATP from ADP in the presence of a proton gradient across the membrane. The catalytic sites are hosted primarily by the beta subunits. This Herminiimonas arsenicoxydans protein is ATP synthase subunit beta.